We begin with the raw amino-acid sequence, 436 residues long: Chromosomal replication initiator protein DnaA (436 aa).

The tract at residues 1–80 is domain I, interacts with DnaA modulators; that stretch reads MSHEAVWQHV…QAPRFELRVV (80 aa). Residues 80–100 are domain II; the sequence is VPGVVVQEDIFQAAPAEAPRP. The tract at residues 101–317 is domain III, AAA+ region; it reads KLNPKYTFEN…GALMRAIAFA (217 aa). The ATP site is built by Gly-145, Gly-147, Lys-148, and Thr-149. The interval 318 to 436 is domain IV, binds dsDNA; sequence SLNGVELTRA…LLRTLREACT (119 aa).

This sequence belongs to the DnaA family. As to quaternary structure, oligomerizes as a right-handed, spiral filament on DNA at oriC.

The protein resides in the cytoplasm. Functionally, plays an essential role in the initiation and regulation of chromosomal replication. ATP-DnaA binds to the origin of replication (oriC) to initiate formation of the DNA replication initiation complex once per cell cycle. Binds the DnaA box (a 9 base pair repeat at the origin) and separates the double-stranded (ds)DNA. Forms a right-handed helical filament on oriC DNA; dsDNA binds to the exterior of the filament while single-stranded (ss)DNA is stabiized in the filament's interior. The ATP-DnaA-oriC complex binds and stabilizes one strand of the AT-rich DNA unwinding element (DUE), permitting loading of DNA polymerase. After initiation quickly degrades to an ADP-DnaA complex that is not apt for DNA replication. Binds acidic phospholipids. The sequence is that of Chromosomal replication initiator protein DnaA from Thermus thermophilus (strain ATCC BAA-163 / DSM 7039 / HB27).